The chain runs to 156 residues: Arginine repressor (156 aa).

The protein belongs to the ArgR family.

Its subcellular location is the cytoplasm. It participates in amino-acid biosynthesis; L-arginine biosynthesis [regulation]. Its function is as follows. Regulates arginine biosynthesis genes. In Cronobacter sakazakii (strain ATCC BAA-894) (Enterobacter sakazakii), this protein is Arginine repressor.